Reading from the N-terminus, the 562-residue chain is RNA N(6)-adenosine-methyltransferase METTL16 (562 aa).

The segment at 17 to 20 is RNA-binding; it reads PPDF. S-adenosyl-L-methionine-binding residues include R82, G110, S114, E133, T164, and N184. The interval 163 to 167 is K-loop; that stretch reads KTLLM. RNA-binding regions lie at residues 199 to 211, 250 to 254, and 277 to 283; these read SRNPRRPPPSSVN, GKKCS, and QGRTMRW. Residues 289-400 form a VCR 1 region; it reads FYDDVTVPSP…QLREVPRAPE (112 aa). A Phosphoserine modification is found at S329. The span at 402 to 413 shows a compositional bias: basic and acidic residues; sequence VIQALEEKKPTP. The tract at residues 402–498 is disordered; it reads VIQALEEKKP…DQEASEQFGS (97 aa). Over residues 458–467 the composition is skewed to acidic residues; that stretch reads ENPEPTEDER. T463 bears the Phosphothreonine mark. A compositionally biased stretch (polar residues) spans 480-496; sequence CQGSSNGAQDQEASEQF. Positions 514-562 are VCR 2; sequence YLFKCLINVKKEVDDALVEMHWVEGQNRDLMNQLCTYIRNQIFRLVAVN.

The protein belongs to the methyltransferase superfamily. METTL16/RlmF family. In terms of assembly, interacts with MEPCE. Interacts with LARP7.

The protein localises to the nucleus. It localises to the cytoplasm. It catalyses the reaction adenosine in U6 snRNA + S-adenosyl-L-methionine = N(6)-methyladenosine in U6 snRNA + S-adenosyl-L-homocysteine + H(+). It carries out the reaction an adenosine in mRNA + S-adenosyl-L-methionine = an N(6)-methyladenosine in mRNA + S-adenosyl-L-homocysteine + H(+). Its activity is regulated as follows. Methyltransferase activity is autoinhibited by the K-loop region that blocks S-adenosyl-L-methionine-binding. Upon activation, K-loop changes conformation, allowing S-adenosyl-L-methionine-binding and subsequent methyltransferase activity. mRNA N6-adenosine-methyltransferase activity is inhibited by zinc. RNA N6-methyltransferase that methylates adenosine residues at the N(6) position of a subset of RNAs and is involved in S-adenosyl-L-methionine homeostasis by regulating expression of MAT2A transcripts. Able to N6-methylate a subset of mRNAs and U6 small nuclear RNAs (U6 snRNAs). In contrast to the METTL3-METTL14 heterodimer, only able to methylate a limited number of RNAs: requires both a 5'UACAGAGAA-3' nonamer sequence and a specific RNA structure. Plays a key role in S-adenosyl-L-methionine homeostasis by mediating N6-methylation of MAT2A mRNAs, altering splicing of MAT2A transcripts: in presence of S-adenosyl-L-methionine, binds the 3'-UTR region of MAT2A mRNA and specifically N6-methylates the first hairpin of MAT2A mRNA, preventing recognition of their 3'-splice site by U2AF1/U2AF35, thereby inhibiting splicing and protein production of S-adenosylmethionine synthase. In S-adenosyl-L-methionine-limiting conditions, binds the 3'-UTR region of MAT2A mRNA but stalls due to the lack of a methyl donor, preventing N6-methylation and promoting expression of MAT2A. In addition to mRNAs, also able to mediate N6-methylation of U6 small nuclear RNA (U6 snRNA): specifically N6-methylates adenine in position 43 of U6 snRNAs. Also able to bind various lncRNAs, such as 7SK snRNA (7SK RNA) or 7SL RNA. Specifically binds the 3'-end of the MALAT1 long non-coding RNA. In Homo sapiens (Human), this protein is RNA N(6)-adenosine-methyltransferase METTL16.